Reading from the N-terminus, the 968-residue chain is Glycine dehydrogenase (decarboxylating) (968 aa).

Lys717 is modified (N6-(pyridoxal phosphate)lysine).

It belongs to the GcvP family. The glycine cleavage system is composed of four proteins: P, T, L and H. Requires pyridoxal 5'-phosphate as cofactor.

The enzyme catalyses N(6)-[(R)-lipoyl]-L-lysyl-[glycine-cleavage complex H protein] + glycine + H(+) = N(6)-[(R)-S(8)-aminomethyldihydrolipoyl]-L-lysyl-[glycine-cleavage complex H protein] + CO2. Functionally, the glycine cleavage system catalyzes the degradation of glycine. The P protein binds the alpha-amino group of glycine through its pyridoxal phosphate cofactor; CO(2) is released and the remaining methylamine moiety is then transferred to the lipoamide cofactor of the H protein. In Tropheryma whipplei (strain TW08/27) (Whipple's bacillus), this protein is Glycine dehydrogenase (decarboxylating).